An 85-amino-acid chain; its full sequence is Small ribosomal subunit protein bS18 (85 aa).

The protein belongs to the bacterial ribosomal protein bS18 family. Part of the 30S ribosomal subunit. Forms a tight heterodimer with protein bS6.

Functionally, binds as a heterodimer with protein bS6 to the central domain of the 16S rRNA, where it helps stabilize the platform of the 30S subunit. This chain is Small ribosomal subunit protein bS18, found in Solidesulfovibrio magneticus (strain ATCC 700980 / DSM 13731 / RS-1) (Desulfovibrio magneticus).